A 637-amino-acid chain; its full sequence is MGKIIGIDLGTTNSCVAVLDGDKPRVIENAEGERTTASVIAYTDGETLVGQPAKRQAVTNPTNTLFAIKRLIGRRFEDEEVQRDIEIMPYKIVKADNGDAWVEAKGQKMAAPQVSAEVLKKMKKTAEDFLGEEVTGAVITVPAYFNDAQRQATKDAGRIAGLEVKRIINEPTAAALAYGLDKKGGDRTIAVYDLGGGTFDISIIEIDEVEGEKTFEVLATNGDTHLGGEDFDNRLINYLVDEFKKEQGIDLKTDPLAMQRVKEAAEKAKIELSFTSQTDVNLPYVTADATAPKHMNVKVTRAKLESLVEDLVQRSLEPLKVALADADLSVNDITDVILVGGQTRMPMVQAKVAEFFGKEARRDVNPDEAVAMGAAVQGGVLAGDVKDVLLLDVTPLSLGIETMGGVMTKLVEKNTTIPTKANQVFSTAEDNQSAVTIHVLQGERKQAMYNKSLGQFNLEGIQPAPRGMPQIEVTFDLDADGILHVSAKDKQTGKEQKITIQASGGLSDDEIEKMVQEAEANKEADKKFEELATARNQADQMIHGTRKQVEEAGDALPAEDKEKIEAAVSELEDARKGDDKEAIDAKVQALMTASQKLMEIAQQQAQAQAAQGGDEAAQSKDDDVVDAEFEEVKDDKK.

Phosphothreonine; by autocatalysis is present on threonine 198. The span at 606–616 (QAQAAQGGDEA) shows a compositional bias: low complexity. The segment at 606-637 (QAQAAQGGDEAAQSKDDDVVDAEFEEVKDDKK) is disordered. Residues 623-637 (DVVDAEFEEVKDDKK) are compositionally biased toward acidic residues.

This sequence belongs to the heat shock protein 70 family.

Acts as a chaperone. In Vibrio proteolyticus (Aeromonas proteolytica), this protein is Chaperone protein DnaK (dnaK).